The sequence spans 254 residues: MAHQLLIGKGMITLNLKRIFLALTLLPLFAVAADDCALSDPTLTVQAYTVNPQTERVKMYWQKANGEAWGTLHALLADINSQGQVQMAMNGGIYDESYAPLGLYIENGQQKVALNLASGEGNFFIRPGGVFYVAGDKVGIVRLDAFKTSKEIQFAVQSGPMLMENGVINPRIHPNVASSKIRNGVGINKHGNAVFLLSQQATNFYDFACYAKAKLNVEQLLYLDGTISHMYMKGGAIPWQRYPFVTMISVERKG.

This is an uncharacterized protein from Escherichia coli (strain K12).